We begin with the raw amino-acid sequence, 324 residues long: Serpentine receptor class delta-30 (324 aa).

The next 7 membrane-spanning stretches (helical) occupy residues 5–25 (IIHS…MYLA), 38–58 (AIIT…FFVM), 83–103 (ACYV…IWMI), 124–144 (VFVA…WFSF), 176–196 (ITLI…YIWI), 227–247 (FQVF…SMFT), and 258–278 (AISV…ILFV). Residues 290–324 (KQPKPHPEMCGPIRSNTRTTSISVTNNSSHLSSAH) form a disordered region. Positions 303-324 (RSNTRTTSISVTNNSSHLSSAH) are enriched in polar residues.

The protein belongs to the nematode receptor-like protein srd family.

It is found in the membrane. This Caenorhabditis elegans protein is Serpentine receptor class delta-30 (srd-30).